A 133-amino-acid chain; its full sequence is Holo-[acyl-carrier-protein] synthase (133 aa).

Mg(2+) is bound by residues aspartate 8 and glutamate 57.

This sequence belongs to the P-Pant transferase superfamily. AcpS family. It depends on Mg(2+) as a cofactor.

It is found in the cytoplasm. It carries out the reaction apo-[ACP] + CoA = holo-[ACP] + adenosine 3',5'-bisphosphate + H(+). Functionally, transfers the 4'-phosphopantetheine moiety from coenzyme A to a Ser of acyl-carrier-protein. This chain is Holo-[acyl-carrier-protein] synthase, found in Bartonella tribocorum (strain CIP 105476 / IBS 506).